The primary structure comprises 497 residues: Cytochrome P450 2D6 (497 aa).

Asp301 contacts substrate. Cys443 is a binding site for heme.

The protein belongs to the cytochrome P450 family. The cofactor is heme.

Its subcellular location is the endoplasmic reticulum membrane. It is found in the microsome membrane. It carries out the reaction (5Z,8Z,11Z,14Z)-eicosatetraenoate + reduced [NADPH--hemoprotein reductase] + O2 = (8R,9S)-epoxy-(5Z,11Z,14Z)-eicosatrienoate + oxidized [NADPH--hemoprotein reductase] + H2O + H(+). The catalysed reaction is (5Z,8Z,11Z,14Z)-eicosatetraenoate + reduced [NADPH--hemoprotein reductase] + O2 = (11R,12S)-epoxy-(5Z,8Z,14Z)-eicosatrienoate + oxidized [NADPH--hemoprotein reductase] + H2O + H(+). The enzyme catalyses (5Z,8Z,11Z,14Z)-eicosatetraenoate + reduced [NADPH--hemoprotein reductase] + O2 = (14S,15R)-epoxy-(5Z,8Z,11Z)-eicosatrienoate + oxidized [NADPH--hemoprotein reductase] + H2O + H(+). It catalyses the reaction N-(5Z,8Z,11Z,14Z-eicosatetraenoyl)-ethanolamine + reduced [NADPH--hemoprotein reductase] + O2 = N-(8,9-epoxy-5Z,11Z,14Z-eicosatrienoyl)-ethanolamine + oxidized [NADPH--hemoprotein reductase] + H2O + H(+). It carries out the reaction N-(5Z,8Z,11Z,14Z-eicosatetraenoyl)-ethanolamine + reduced [NADPH--hemoprotein reductase] + O2 = N-(11,12-epoxy-5Z,8Z,14Z-eicosatrienoyl)-ethanolamine + oxidized [NADPH--hemoprotein reductase] + H2O + H(+). The catalysed reaction is N-(5Z,8Z,11Z,14Z-eicosatetraenoyl)-ethanolamine + reduced [NADPH--hemoprotein reductase] + O2 = N-(14,15-epoxy-5Z,8Z,11Z-eicosatrienoyl)-ethanolamine + oxidized [NADPH--hemoprotein reductase] + H2O + H(+). The enzyme catalyses N-(5Z,8Z,11Z,14Z-eicosatetraenoyl)-ethanolamine + reduced [NADPH--hemoprotein reductase] + O2 = N-(20-hydroxy-5Z,8Z,11Z,14Z-eicosatetraenoyl)-ethanolamine + oxidized [NADPH--hemoprotein reductase] + H2O + H(+). It catalyses the reaction (5Z,8Z,11Z,14Z,17Z)-eicosapentaenoate + reduced [NADPH--hemoprotein reductase] + O2 = (17S,18R)-epoxy-(5Z,8Z,11Z,14Z)-eicosatetraenoate + oxidized [NADPH--hemoprotein reductase] + H2O + H(+). It carries out the reaction (4Z,7Z,10Z,13Z,16Z,19Z)-docosahexaenoate + reduced [NADPH--hemoprotein reductase] + O2 = (19R,20S)-epoxy-(4Z,7Z,10Z,13Z,16Z)-docosapentaenoate + oxidized [NADPH--hemoprotein reductase] + H2O + H(+). The catalysed reaction is (4Z,7Z,10Z,13Z,16Z,19Z)-docosahexaenoate + reduced [NADPH--hemoprotein reductase] + O2 = (19S,20R)-epoxy-(4Z,7Z,10Z,13Z,16Z)-docosapentaenoate + oxidized [NADPH--hemoprotein reductase] + H2O + H(+). The enzyme catalyses cholesterol + reduced [NADPH--hemoprotein reductase] + O2 = 25-hydroxycholesterol + oxidized [NADPH--hemoprotein reductase] + H2O + H(+). It catalyses the reaction all-trans-retinol + reduced [NADPH--hemoprotein reductase] + O2 = all-trans-retinal + oxidized [NADPH--hemoprotein reductase] + 2 H2O + H(+). Its pathway is cofactor metabolism; retinol metabolism. It functions in the pathway lipid metabolism; fatty acid metabolism. It participates in steroid metabolism; cholesterol metabolism. Functionally, a cytochrome P450 monooxygenase involved in the metabolism of fatty acids, steroids and retinoids. Mechanistically, uses molecular oxygen inserting one oxygen atom into a substrate, and reducing the second into a water molecule, with two electrons provided by NADPH via cytochrome P450 reductase (NADPH--hemoprotein reductase). Catalyzes the epoxidation of double bonds of polyunsaturated fatty acids (PUFA). Metabolizes endocannabinoid arachidonoylethanolamide (anandamide) to 20-hydroxyeicosatetraenoic acid ethanolamide (20-HETE-EA) and 8,9-, 11,12-, and 14,15-epoxyeicosatrienoic acid ethanolamides (EpETrE-EAs), potentially modulating endocannabinoid system signaling. Catalyzes the hydroxylation of carbon-hydrogen bonds. Metabolizes cholesterol toward 25-hydroxycholesterol, a physiological regulator of cellular cholesterol homeostasis. Catalyzes the oxidative transformations of all-trans retinol to all-trans retinal, a precursor for the active form all-trans-retinoic acid. Also involved in the oxidative metabolism of drugs such as antiarrhythmics, adrenoceptor antagonists, and tricyclic antidepressants. The chain is Cytochrome P450 2D6 (CYP2D6) from Pan paniscus (Pygmy chimpanzee).